The primary structure comprises 68 residues: ATP synthase F(0) complex subunit 8 (68 aa).

Residues 8-24 (TWSITIVSMIITLFIMF) form a helical membrane-spanning segment. K54 bears the N6-acetyllysine; alternate mark. N6-succinyllysine; alternate is present on K54. At K57 the chain carries N6-acetyllysine.

The protein belongs to the ATPase protein 8 family. In terms of assembly, component of the ATP synthase complex composed at least of ATP5F1A/subunit alpha, ATP5F1B/subunit beta, ATP5MC1/subunit c (homooctomer), MT-ATP6/subunit a, MT-ATP8/subunit 8, ATP5ME/subunit e, ATP5MF/subunit f, ATP5MG/subunit g, ATP5MK/subunit k, ATP5MJ/subunit j, ATP5F1C/subunit gamma, ATP5F1D/subunit delta, ATP5F1E/subunit epsilon, ATP5PF/subunit F6, ATP5PB/subunit b, ATP5PD/subunit d, ATP5PO/subunit OSCP. ATP synthase complex consists of a soluble F(1) head domain (subunits alpha(3) and beta(3)) - the catalytic core - and a membrane F(0) domain - the membrane proton channel (subunits c, a, 8, e, f, g, k and j). These two domains are linked by a central stalk (subunits gamma, delta, and epsilon) rotating inside the F1 region and a stationary peripheral stalk (subunits F6, b, d, and OSCP). Interacts with PRICKLE3.

It localises to the mitochondrion membrane. In terms of biological role, subunit 8, of the mitochondrial membrane ATP synthase complex (F(1)F(0) ATP synthase or Complex V) that produces ATP from ADP in the presence of a proton gradient across the membrane which is generated by electron transport complexes of the respiratory chain. ATP synthase complex consist of a soluble F(1) head domain - the catalytic core - and a membrane F(1) domain - the membrane proton channel. These two domains are linked by a central stalk rotating inside the F(1) region and a stationary peripheral stalk. During catalysis, ATP synthesis in the catalytic domain of F(1) is coupled via a rotary mechanism of the central stalk subunits to proton translocation. In vivo, can only synthesize ATP although its ATP hydrolase activity can be activated artificially in vitro. Part of the complex F(0) domain. This Ceratotherium simum (White rhinoceros) protein is ATP synthase F(0) complex subunit 8.